The following is a 456-amino-acid chain: RuvB-like helicase 1 (456 aa).

ATP is bound at residue 70–77 (GPPGTGKT).

The protein belongs to the RuvB family. Forms homohexameric rings. May form a dodecamer with rept made of two stacked hexameric rings. Component of the chromatin remodeling Ino80 complex. Interacts with Myc and rept. Higher expression occurs in primordia of mesoderm, anterior and posterior midgut and cephalic furrow early in gastrulation, as well as in endoderm and mesoderm lineages during germ band extension. Later in development expression is only maintained in endoderm cells. Expressed in thoracic and abdominal segment neural precursors of all embryonic chordotonal organs.

The protein localises to the nucleus. The catalysed reaction is ATP + H2O = ADP + phosphate + H(+). Its function is as follows. Acts as a transcriptional coactivator in Wg signaling caused by altered arm signaling. Pont and rept interfere antagonistically with nuclear arm signaling function, and are required to enhance or reduce arm activity, respectively. Also an essential cofactor for the normal function of Myc; required for cellular proliferation and growth. Functionally, proposed core component of the chromatin remodeling Ino80 complex which is involved in transcriptional regulation, DNA replication and probably DNA repair. The chain is RuvB-like helicase 1 from Drosophila melanogaster (Fruit fly).